We begin with the raw amino-acid sequence, 256 residues long: Cell division protein ZapD (256 aa).

The protein belongs to the ZapD family. Interacts with FtsZ.

It is found in the cytoplasm. Its function is as follows. Cell division factor that enhances FtsZ-ring assembly. Directly interacts with FtsZ and promotes bundling of FtsZ protofilaments, with a reduction in FtsZ GTPase activity. This is Cell division protein ZapD from Aromatoleum aromaticum (strain DSM 19018 / LMG 30748 / EbN1) (Azoarcus sp. (strain EbN1)).